The primary structure comprises 1052 residues: Malignant fibrous histiocytoma-amplified sequence 1 (1052 aa).

The residue at position 2 (alanine 2) is an N-acetylalanine. LRR repeat units lie at residues aspartate 64 to alanine 85, serine 88 to leucine 109, histidine 112 to alanine 133, glutamate 136 to leucine 157, histidine 159 to leucine 180, arginine 182 to leucine 203, alanine 205 to leucine 226, alanine 228 to leucine 249, serine 251 to leucine 272, arginine 274 to alanine 296, glycine 297 to leucine 318, arginine 320 to leucine 341, and glycine 343 to leucine 364. The interval aspartate 64–leucine 364 is required for interaction with PJA2. Residues aspartate 64–arginine 649 form a required for interaction with PPP2R2A region. Residues glutamine 403–arginine 649 enclose the Roc domain. Lysine 601 carries the N6-acetyllysine modification.

As to quaternary structure, interacts with RAF1. Interacts with HSPD1. Interacts with PPP2CA; retains PPP2CA into the cytoplasm and excludes it from the nucleus. Interacts with PPP2R2A; the interaction is direct. Interacts with PJA2. Ubiquitinated. Ubiquitination by PJA2 does not lead MFHAS1 to proteasomal degradation but positively regulates its function in polarization of macrophages. As to expression, ubiquitously expressed. Overexpressed in malignant fibrous histiocytomas. Expressed in red blood cells (at protein level).

It localises to the cytoplasm. Probable GTP-binding protein. Functions in innate immunity and more specifically the inflammatory response as a regulator of the Toll-like receptor TLR2 and TLR4 signaling pathways. Negatively regulates the part of the TLR4 signaling pathway that leads to the activation of the transcription factor AP-1. By retaining the phosphatase complex PP2A into the cytoplasm, prevents the dephosphorylation of the AP-1 subunit JUN which is required for proper activation of the transcription factor. Both inhibits and activates the TLR2-dependent signaling pathway. Positively regulates the TLR2 signaling pathway to activate specifically the downstream p38 and JNK MAP kinases and promote the polarization of macrophages toward the pro-inflammatory M1 phenotype. It may also play a role in the regulation of inflammation induced by high glucose through the PKB/AKT signaling pathway. Also involved in erythrocyte differentiation through activation of the ERK1/ERK2 signaling pathway. The sequence is that of Malignant fibrous histiocytoma-amplified sequence 1 from Homo sapiens (Human).